A 235-amino-acid chain; its full sequence is UPF0702 transmembrane protein YdfS (235 aa).

2 helical membrane-spanning segments follow: residues 32–52 and 60–80; these read MTIF…GLAY and NMAI…FLSI.

It belongs to the UPF0702 family.

It is found in the cell membrane. The chain is UPF0702 transmembrane protein YdfS (ydfS) from Bacillus subtilis (strain 168).